We begin with the raw amino-acid sequence, 124 residues long: Cytochrome c2 (124 aa).

Position 1 is a pyrrolidone carboxylic acid (glutamine 1). Heme c is bound by residues cysteine 15, cysteine 18, histidine 19, and methionine 100.

Binds 1 heme c group covalently per subunit.

Its subcellular location is the periplasm. Functionally, cytochrome c2 is found mainly in purple, non-sulfur, photosynthetic bacteria where it functions as the electron donor to the oxidized bacteriochlorophyll in the photophosphorylation pathway. However, it may also have a role in the respiratory chain and is found in some non-photosynthetic bacteria. In Cereibacter sphaeroides (Rhodobacter sphaeroides), this protein is Cytochrome c2 (cycA).